The chain runs to 178 residues: Large ribosomal subunit protein bL25 (178 aa).

The protein belongs to the bacterial ribosomal protein bL25 family. CTC subfamily. Part of the 50S ribosomal subunit; part of the 5S rRNA/L5/L18/L25 subcomplex. Contacts the 5S rRNA. Binds to the 5S rRNA independently of L5 and L18.

Its function is as follows. This is one of the proteins that binds to the 5S RNA in the ribosome where it forms part of the central protuberance. This chain is Large ribosomal subunit protein bL25, found in Wolinella succinogenes (strain ATCC 29543 / DSM 1740 / CCUG 13145 / JCM 31913 / LMG 7466 / NCTC 11488 / FDC 602W) (Vibrio succinogenes).